Here is a 188-residue protein sequence, read N- to C-terminus: Elongation factor P (188 aa).

This sequence belongs to the elongation factor P family.

The protein resides in the cytoplasm. The protein operates within protein biosynthesis; polypeptide chain elongation. Its function is as follows. Involved in peptide bond synthesis. Stimulates efficient translation and peptide-bond synthesis on native or reconstituted 70S ribosomes in vitro. Probably functions indirectly by altering the affinity of the ribosome for aminoacyl-tRNA, thus increasing their reactivity as acceptors for peptidyl transferase. This chain is Elongation factor P, found in Sulfurovum sp. (strain NBC37-1).